We begin with the raw amino-acid sequence, 485 residues long: NADH-quinone oxidoreductase subunit N (485 aa).

Helical transmembrane passes span 10–30 (ILPE…GLFL), 40–60 (IFFQ…EYLI), 71–91 (VVFS…AVFV), 107–127 (GDFY…TAAH), 129–149 (LVTI…LIAI), 164–184 (FVLG…VYGM), 209–229 (FLLV…GAFP), 248–268 (IVAT…LFVG), 276–296 (WIYL…LVAL), 304–324 (LLGY…TLNP), 336–356 (VIVY…ISVG), 377–397 (AFIL…GGFI), 410–430 (GNYF…FYYV), and 454–474 (LIAL…PMLL).

It belongs to the complex I subunit 2 family. NDH-1 is composed of 14 different subunits. Subunits NuoA, H, J, K, L, M, N constitute the membrane sector of the complex.

It localises to the cell inner membrane. It catalyses the reaction a quinone + NADH + 5 H(+)(in) = a quinol + NAD(+) + 4 H(+)(out). Its function is as follows. NDH-1 shuttles electrons from NADH, via FMN and iron-sulfur (Fe-S) centers, to quinones in the respiratory chain. The immediate electron acceptor for the enzyme in this species is believed to be ubiquinone. Couples the redox reaction to proton translocation (for every two electrons transferred, four hydrogen ions are translocated across the cytoplasmic membrane), and thus conserves the redox energy in a proton gradient. The polypeptide is NADH-quinone oxidoreductase subunit N (Francisella tularensis subsp. holarctica (strain FTNF002-00 / FTA)).